A 126-amino-acid polypeptide reads, in one-letter code: Small ribosomal subunit protein uS13 (126 aa).

Residues 95 to 126 (GMPVRGQRTRTNARTRRGRRGQAIGIKKKVKK) are disordered.

The protein belongs to the universal ribosomal protein uS13 family. Part of the 30S ribosomal subunit. Forms a loose heterodimer with protein S19. Forms two bridges to the 50S subunit in the 70S ribosome.

Its function is as follows. Located at the top of the head of the 30S subunit, it contacts several helices of the 16S rRNA. In the 70S ribosome it contacts the 23S rRNA (bridge B1a) and protein L5 of the 50S subunit (bridge B1b), connecting the 2 subunits; these bridges are implicated in subunit movement. Contacts the tRNAs in the A and P-sites. The chain is Small ribosomal subunit protein uS13 from Chloroflexus aggregans (strain MD-66 / DSM 9485).